The sequence spans 1794 residues: Protein TIC 214 (1794 aa).

6 helical membrane passes run 23–43 (VVVGLYYGFITTFSIGPSYLF), 64–84 (FIMGQFMMLISIYYTPLHLAL), 87–107 (PHTITVLVLPYLLFHFFWNNH), 124–144 (LSIQCVFLNNLIFQLFNHFIL), 172–192 (VGWLIGHILFMKWVGLVLFWI), and 218–238 (ILSILLFITCVYYLGRIPSPI). Residues 244–307 (KETSETGETE…REGVNGKEKT (64 aa)) form a disordered region. Acidic residues predominate over residues 248-258 (ETGETEEETDV). Basic and acidic residues-rich tracts occupy residues 259 to 276 (EIERTSETKGTEQEKEGS) and 286 to 307 (SEEKGDPDKIDEREGVNGKEKT).

It belongs to the TIC214 family. As to quaternary structure, part of the Tic complex.

It is found in the plastid. Its subcellular location is the chloroplast inner membrane. Its function is as follows. Involved in protein precursor import into chloroplasts. May be part of an intermediate translocation complex acting as a protein-conducting channel at the inner envelope. This chain is Protein TIC 214, found in Amborella trichopoda.